Consider the following 309-residue polypeptide: MRIIFLGSPSYAVHALDALVAAGYTIVGVVTQPDRPAGRDRRLTPPPVKVAALAHGLPVLQPETLRDPEVVETLRALQPDVGVVAAYGEILRRAVLEIPPLGYLNIHPSLLPLYRGPTPVAGAILAGETVTGVTIMRLDPGMDSGPILAQAMVDLPPNARTGPLTDELFRLGATLLVEVLPRYARGEIELRPQDHSQATVTKMLKKEDGRIDWTLPAIVIERMTRAYDPWPSAYTFWRGQMLRIMSAAVAPTDASATPGMVIGRSAHGHPLVQTGSDALELVEVQPASRRPMSGAAWLAGVHAPEITLG.

109 to 112 contacts (6S)-5,6,7,8-tetrahydrofolate; the sequence is SLLP.

The protein belongs to the Fmt family.

The catalysed reaction is L-methionyl-tRNA(fMet) + (6R)-10-formyltetrahydrofolate = N-formyl-L-methionyl-tRNA(fMet) + (6S)-5,6,7,8-tetrahydrofolate + H(+). Attaches a formyl group to the free amino group of methionyl-tRNA(fMet). The formyl group appears to play a dual role in the initiator identity of N-formylmethionyl-tRNA by promoting its recognition by IF2 and preventing the misappropriation of this tRNA by the elongation apparatus. In Chloroflexus aggregans (strain MD-66 / DSM 9485), this protein is Methionyl-tRNA formyltransferase.